Here is a 545-residue protein sequence, read N- to C-terminus: Protein BTN1 (545 aa).

The segment at 23–49 (AHSSASDPRRTMVTNTSESPLASRQAT) is disordered. Polar residues predominate over residues 34–49 (MVTNTSESPLASRQAT). A run of 5 helical transmembrane segments spans residues 66–86 (AFFL…TAAL), 97–117 (LVSF…PYFL), 127–147 (VWSC…FPAL), 205–225 (VGWF…AWWV), and 234–254 (GMAI…IILP). A disordered region spans residues 276–304 (TEDDAVERSSSDDQPTTANDDRQDSTIHI). 3 helical membrane passes run 322-342 (MALL…VYAM), 408-428 (LLWL…TESL), and 440-460 (LVIV…VSVF).

Belongs to the battenin family.

It is found in the vacuole membrane. In terms of biological role, involved in vacuolar transport and vacuole pH homeostasis. Also required for cytokinesis. This chain is Protein BTN1 (BTN1), found in Mycosarcoma maydis (Corn smut fungus).